We begin with the raw amino-acid sequence, 266 residues long: ATP synthase subunit a (266 aa).

A run of 5 helical transmembrane segments spans residues 33 to 53 (FWTL…LFLA), 95 to 115 (VIAP…LMDL), 141 to 161 (DVNI…FYSI), 206 to 226 (LFGN…LLPW), and 237 to 257 (AIFH…LTIV).

The protein belongs to the ATPase A chain family. F-type ATPases have 2 components, CF(1) - the catalytic core - and CF(0) - the membrane proton channel. CF(1) has five subunits: alpha(3), beta(3), gamma(1), delta(1), epsilon(1). CF(0) has three main subunits: a(1), b(2) and c(9-12). The alpha and beta chains form an alternating ring which encloses part of the gamma chain. CF(1) is attached to CF(0) by a central stalk formed by the gamma and epsilon chains, while a peripheral stalk is formed by the delta and b chains.

It is found in the cell inner membrane. Functionally, key component of the proton channel; it plays a direct role in the translocation of protons across the membrane. The protein is ATP synthase subunit a of Klebsiella pneumoniae subsp. pneumoniae (strain ATCC 700721 / MGH 78578).